Here is a 602-residue protein sequence, read N- to C-terminus: Phosphoenolpyruvate carboxykinase [GTP] (602 aa).

Substrate is bound by residues Arg-89 and 211-213; that span reads YAG. Lys-220 and His-239 together coordinate Mn(2+). Ser-260 is a binding site for substrate. Position 261–266 (261–266) interacts with GTP; sequence GSGKTS. Residue Ser-262 is part of the active site. Asp-277 serves as a coordination point for Mn(2+). 367-369 is a substrate binding site; it reads NAR. 2 residues coordinate GTP: Arg-369 and Arg-400.

It belongs to the phosphoenolpyruvate carboxykinase [GTP] family. The cofactor is Mn(2+).

Its subcellular location is the cytoplasm. It carries out the reaction oxaloacetate + GTP = phosphoenolpyruvate + GDP + CO2. It functions in the pathway carbohydrate biosynthesis; gluconeogenesis. Its function is as follows. Catalyzes the conversion of oxaloacetate (OAA) to phosphoenolpyruvate (PEP), the rate-limiting step in the metabolic pathway that produces glucose from lactate and other precursors derived from the citric acid cycle. The polypeptide is Phosphoenolpyruvate carboxykinase [GTP] (Sulfurisphaera tokodaii (strain DSM 16993 / JCM 10545 / NBRC 100140 / 7) (Sulfolobus tokodaii)).